The primary structure comprises 146 residues: Basic phospholipase A2 beta-bungarotoxin A1 chain (146 aa).

The N-terminal stretch at 1-19 (MNPAHLLVLPAVCVSFLGA) is a signal peptide. A propeptide spanning residues 20–27 (SIIPPQSL) is cleaved from the precursor. 6 cysteine pairs are disulfide-bonded: Cys54–Cys145, Cys56–Cys72, Cys71–Cys126, Cys78–Cys119, Cys87–Cys112, and Cys105–Cys117. The Ca(2+) site is built by Tyr55, Gly57, and Gly59. His75 is an active-site residue. Asp76 lines the Ca(2+) pocket. Residue Asp120 is part of the active site.

This sequence belongs to the phospholipase A2 family. Group I subfamily. D49 sub-subfamily. As to quaternary structure, heterodimer with beta-bungarotoxin B chain; disulfide-linked. The A chain has phospholipase A2 activity and the B chain shows homology with the basic protease inhibitors. It depends on Ca(2+) as a cofactor. As to expression, expressed by the venom gland.

The protein resides in the secreted. The enzyme catalyses a 1,2-diacyl-sn-glycero-3-phosphocholine + H2O = a 1-acyl-sn-glycero-3-phosphocholine + a fatty acid + H(+). Snake venom phospholipase A2 (PLA2) that inhibits neuromuscular transmission by blocking acetylcholine release from the nerve termini. PLA2 catalyzes the calcium-dependent hydrolysis of the 2-acyl groups in 3-sn-phosphoglycerides. The chain is Basic phospholipase A2 beta-bungarotoxin A1 chain from Bungarus flaviceps flaviceps (Red-headed krait).